Reading from the N-terminus, the 130-residue chain is Small ribosomal subunit protein uS9 (130 aa).

The disordered stretch occupies residues 106–130 (RDSRKVERKKPGLKKARKASQFSKR). Positions 111 to 130 (VERKKPGLKKARKASQFSKR) are enriched in basic residues.

Belongs to the universal ribosomal protein uS9 family.

The polypeptide is Small ribosomal subunit protein uS9 (Streptococcus pneumoniae (strain ATCC 700669 / Spain 23F-1)).